The sequence spans 76 residues: Esculentin-2MT1 (76 aa).

An N-terminal signal peptide occupies residues 1-22 (MFTMKKPLLLLFFLGTISLSLC). Residues 23-37 (EEERNADEDDGEKEV) constitute a propeptide that is removed on maturation. Cys70 and Cys76 are disulfide-bonded.

It belongs to the frog skin active peptide (FSAP) family. Esculentin subfamily. As to expression, expressed by the skin glands.

It is found in the secreted. Its function is as follows. Antimicrobial peptide. In Amolops mantzorum (Sichuan torrent frog), this protein is Esculentin-2MT1.